The primary structure comprises 393 residues: S-adenosylmethionine synthase (393 aa).

His-16 contacts ATP. Asp-18 contacts Mg(2+). Glu-44 lines the K(+) pocket. Positions 57 and 100 each coordinate L-methionine. The interval 100 to 110 is flexible loop; it reads QSNDIAQGVDH. ATP-binding positions include 167–169, 238–239, Asp-247, 253–254, Ala-270, and Lys-274; these read DAK, RF, and RK. Asp-247 lines the L-methionine pocket. L-methionine is bound at residue Lys-278.

The protein belongs to the AdoMet synthase family. Homotetramer; dimer of dimers. Mg(2+) serves as cofactor. It depends on K(+) as a cofactor.

The protein resides in the cytoplasm. The catalysed reaction is L-methionine + ATP + H2O = S-adenosyl-L-methionine + phosphate + diphosphate. Its pathway is amino-acid biosynthesis; S-adenosyl-L-methionine biosynthesis; S-adenosyl-L-methionine from L-methionine: step 1/1. Catalyzes the formation of S-adenosylmethionine (AdoMet) from methionine and ATP. The overall synthetic reaction is composed of two sequential steps, AdoMet formation and the subsequent tripolyphosphate hydrolysis which occurs prior to release of AdoMet from the enzyme. This Variovorax paradoxus (strain S110) protein is S-adenosylmethionine synthase.